Here is a 222-residue protein sequence, read N- to C-terminus: Superoxide dismutase [Mn], mitochondrial (222 aa).

A mitochondrion-targeting transit peptide spans 1–24; it reads MLCRAACSAGRRLGPAASTAGSRH. A Mn(2+)-binding site is contributed by His-50. Residue Tyr-58 is modified to 3'-nitrotyrosine. Lys-68 and Lys-75 each carry N6-acetyllysine; alternate. 2 positions are modified to N6-succinyllysine; alternate: Lys-68 and Lys-75. Residue His-98 participates in Mn(2+) binding. An N6-acetyllysine modification is found at Lys-114. N6-acetyllysine; alternate is present on residues Lys-122 and Lys-130. Lys-122 and Lys-130 each carry N6-succinyllysine; alternate. Residues Asp-183 and His-187 each coordinate Mn(2+). Lys-202 bears the N6-acetyllysine mark.

It belongs to the iron/manganese superoxide dismutase family. In terms of assembly, homotetramer. Mn(2+) serves as cofactor. Nitrated under oxidative stress. Nitration coupled with oxidation inhibits the catalytic activity. In terms of processing, acetylation at Lys-122 decreases enzymatic activity. Deacetylated by SIRT3 upon exposure to ionizing radiations or after long fasting. Post-translationally, polyubiquitinated; leading to proteasomal degradation. Deubiquitinated by USP36 which increases protein stability.

It localises to the mitochondrion matrix. The catalysed reaction is 2 superoxide + 2 H(+) = H2O2 + O2. Its function is as follows. Destroys superoxide anion radicals which are normally produced within the cells and which are toxic to biological systems. This chain is Superoxide dismutase [Mn], mitochondrial (Sod2), found in Rattus norvegicus (Rat).